A 709-amino-acid chain; its full sequence is Polyribonucleotide nucleotidyltransferase (709 aa).

Positions 487 and 493 each coordinate Mg(2+). The region spanning 554–613 (PRIHTMKISSDKIKDVIGKGGAVIRALCEETGTTIEIEDDGTIKIAATEGAAAKEAIRRI) is the KH domain. An S1 motif domain is found at 623-691 (GKIYTGKVMR…RQGRIRLSIK (69 aa)).

It belongs to the polyribonucleotide nucleotidyltransferase family. Component of the RNA degradosome, which is a multiprotein complex involved in RNA processing and mRNA degradation. The cofactor is Mg(2+).

It is found in the cytoplasm. The enzyme catalyses RNA(n+1) + phosphate = RNA(n) + a ribonucleoside 5'-diphosphate. Functionally, involved in mRNA degradation. Catalyzes the phosphorolysis of single-stranded polyribonucleotides processively in the 3'- to 5'-direction. The chain is Polyribonucleotide nucleotidyltransferase from Aliivibrio fischeri (strain ATCC 700601 / ES114) (Vibrio fischeri).